Reading from the N-terminus, the 103-residue chain is uncharacterized protein (103 aa).

Its subcellular location is the plastid. The protein resides in the chloroplast. This is an uncharacterized protein from Auxenochlorella pyrenoidosa (Freshwater green alga).